The following is a 371-amino-acid chain: Putative glutamate--cysteine ligase 2 (371 aa).

Belongs to the glutamate--cysteine ligase type 2 family. YbdK subfamily.

The enzyme catalyses L-cysteine + L-glutamate + ATP = gamma-L-glutamyl-L-cysteine + ADP + phosphate + H(+). Functionally, ATP-dependent carboxylate-amine ligase which exhibits weak glutamate--cysteine ligase activity. In Paraburkholderia xenovorans (strain LB400), this protein is Putative glutamate--cysteine ligase 2.